Here is a 533-residue protein sequence, read N- to C-terminus: T-complex protein 1 subunit delta (533 aa).

The interval 1–26 (MSAPAAAPAKVLPSRSDFDEKEKEKD) is disordered. A compositionally biased stretch (basic and acidic residues) spans 16–26 (SDFDEKEKEKD).

Belongs to the TCP-1 chaperonin family. Heterooligomeric complex of about 850 to 900 kDa that forms two stacked rings, 12 to 16 nm in diameter.

Its subcellular location is the cytoplasm. Its function is as follows. Molecular chaperone; assists the folding of proteins upon ATP hydrolysis. Known to play a role, in vitro, in the folding of actin and tubulin. The protein is T-complex protein 1 subunit delta (cct4) of Dictyostelium discoideum (Social amoeba).